Here is a 165-residue protein sequence, read N- to C-terminus: MAGTALKRLMAEYKQLTLNPPEGIVAGPMNEENFFEWEALIMGPEDTCFEFGVFPAILSFPLDYPLSPPKMRFTCEMFHPNIYPDGRVCISILHAPGDDPMGYESSAERWSPVQSVEKILLSVVSMLAEPNDESGANVDASKMWRDDREQFYKIAKQIVQKSLGL.

At Ala-2 the chain carries N-acetylalanine. The region spanning 4–164 (TALKRLMAEY…AKQIVQKSLG (161 aa)) is the UBC core domain. Cys-89 (glycyl thioester intermediate) is an active-site residue.

It belongs to the ubiquitin-conjugating enzyme family. In terms of assembly, interacts with AUP1 (via C-terminus); the interaction recruits UBE2G2 to lipid droplets. Interacts with ubiquitin ligases AMFR/gp78 and RNF139/TRC8; recruitment to lipid droplets by AUP1 facilitates interaction of UBE2G2 with AMFR and RNF139, leading to sterol-induced ubiquitination of 3-hydroxy-3-methylglutaryl coenzyme A reductase and its subsequent proteasomal degradation.

The protein resides in the endoplasmic reticulum. The protein localises to the lipid droplet. It catalyses the reaction S-ubiquitinyl-[E1 ubiquitin-activating enzyme]-L-cysteine + [E2 ubiquitin-conjugating enzyme]-L-cysteine = [E1 ubiquitin-activating enzyme]-L-cysteine + S-ubiquitinyl-[E2 ubiquitin-conjugating enzyme]-L-cysteine.. It participates in protein modification; protein ubiquitination. Its function is as follows. Accepts ubiquitin from the E1 complex and catalyzes its covalent attachment to other proteins. In vitro catalyzes 'Lys-48'-linked polyubiquitination. Involved in endoplasmic reticulum-associated degradation (ERAD). Required for sterol-induced ubiquitination of 3-hydroxy-3-methylglutaryl coenzyme A reductase and its subsequent proteasomal degradation. The sequence is that of Ubiquitin-conjugating enzyme E2 G2 from Homo sapiens (Human).